Here is a 317-residue protein sequence, read N- to C-terminus: Electron transfer flavoprotein subunit alpha (317 aa).

Belongs to the ETF alpha-subunit/FixB family. In terms of assembly, heterodimer of an alpha and a beta subunit. FAD serves as cofactor.

It localises to the cytoplasm. It functions in the pathway lipid metabolism; butanoate metabolism. Functionally, part of an electron transfer flavoprotein involved in syntrophic growth of S.wolfei with butyrate. Probably receives electrons from butyryl-CoA dehydrogenases, and transfers them to the membrane-bound quinone oxidoreductase Swol_0698. In Syntrophomonas wolfei subsp. wolfei (strain DSM 2245B / Goettingen), this protein is Electron transfer flavoprotein subunit alpha.